The sequence spans 130 residues: Small ribosomal subunit protein uS9 (130 aa).

Belongs to the universal ribosomal protein uS9 family.

This Colwellia psychrerythraea (strain 34H / ATCC BAA-681) (Vibrio psychroerythus) protein is Small ribosomal subunit protein uS9.